The primary structure comprises 504 residues: Cytochrome P450 2S1 (504 aa).

Cys440 lines the heme pocket.

It belongs to the cytochrome P450 family. Heme serves as cofactor. In terms of tissue distribution, expressed at higher levels in extrahepatic tissues including trachea, lung, stomach, small intestine, colon, kidney, breast, placenta and spleen. Expressed in peripheral blood leukocytes. Constitutively expressed in skin (at protein level).

It localises to the endoplasmic reticulum membrane. It is found in the microsome membrane. It catalyses the reaction all-trans-retinoate + reduced [NADPH--hemoprotein reductase] + O2 = all-trans-5,6-epoxyretinoate + oxidized [NADPH--hemoprotein reductase] + H2O + H(+). The enzyme catalyses all-trans-retinoate + reduced [NADPH--hemoprotein reductase] + O2 = all-trans-4-hydroxyretinoate + oxidized [NADPH--hemoprotein reductase] + H2O + H(+). It carries out the reaction (5S)-hydroperoxy-(6E,8Z,11Z,14Z)-eicosatetraenoate = 5-oxo-(6E,8Z,11Z,14Z)-eicosatetraenoate + H2O. The catalysed reaction is (12S)-hydroperoxy-(5Z,8Z,10E,14Z)-eicosatetraenoate = 12-oxo-(5Z,8Z,10E,14Z)-eicosatetraenoate + H2O. It catalyses the reaction (15S)-hydroperoxy-(5Z,8Z,11Z,13E)-eicosatetraenoate = 15-oxo-(5Z,8Z,11Z,13E)-eicosatetraenoate + H2O. The enzyme catalyses prostaglandin H2 = thromboxane A2. It carries out the reaction prostaglandin H2 = (12S)-hydroxy-(5Z,8E,10E)-heptadecatrienoate + malonaldehyde. The catalysed reaction is (13S)-hydroperoxy-(9Z,11E)-octadecadienoate = 13-oxo-(9Z,11E)-octadecadienoate + H2O. It functions in the pathway lipid metabolism; fatty acid metabolism. Its function is as follows. A cytochrome P450 monooxygenase involved in the metabolism of retinoids and eicosanoids. In epidermis, may contribute to the oxidative metabolism of all-trans-retinoic acid. For this activity, uses molecular oxygen inserting one oxygen atom into a substrate, and reducing the second into a water molecule, with two electrons provided by NADPH via cytochrome P450 reductase (NADPH--hemoprotein reductase). Additionally, displays peroxidase and isomerase activities toward various oxygenated eicosanoids such as prostaglandin H2 (PGH2) and hydroperoxyeicosatetraenoates (HPETEs). Independently of cytochrome P450 reductase, NADPH, and O2, catalyzes the breakdown of PGH2 to hydroxyheptadecatrienoic acid (HHT) and malondialdehyde (MDA), which is known to act as a mediator of DNA damage. This is Cytochrome P450 2S1 from Homo sapiens (Human).